A 251-amino-acid chain; its full sequence is Hydroxyacylglutathione hydrolase (251 aa).

Zn(2+) is bound by residues His58, His60, Asp62, His63, His116, Asp135, and His173.

Belongs to the metallo-beta-lactamase superfamily. Glyoxalase II family. Monomer. Requires Zn(2+) as cofactor.

It carries out the reaction an S-(2-hydroxyacyl)glutathione + H2O = a 2-hydroxy carboxylate + glutathione + H(+). The protein operates within secondary metabolite metabolism; methylglyoxal degradation; (R)-lactate from methylglyoxal: step 2/2. Thiolesterase that catalyzes the hydrolysis of S-D-lactoyl-glutathione to form glutathione and D-lactic acid. The sequence is that of Hydroxyacylglutathione hydrolase from Bdellovibrio bacteriovorus (strain ATCC 15356 / DSM 50701 / NCIMB 9529 / HD100).